The chain runs to 200 residues: Small ribosomal subunit protein uS4 (200 aa).

Residues 20–41 (TGTGKELDKRPYAPGQHGPNQR) are disordered. The S4 RNA-binding domain maps to 92-152 (SRLDNLVYRL…EKSKNLDVVK (61 aa)).

It belongs to the universal ribosomal protein uS4 family. Part of the 30S ribosomal subunit. Contacts protein S5. The interaction surface between S4 and S5 is involved in control of translational fidelity.

Its function is as follows. One of the primary rRNA binding proteins, it binds directly to 16S rRNA where it nucleates assembly of the body of the 30S subunit. In terms of biological role, with S5 and S12 plays an important role in translational accuracy. The chain is Small ribosomal subunit protein uS4 from Oceanobacillus iheyensis (strain DSM 14371 / CIP 107618 / JCM 11309 / KCTC 3954 / HTE831).